A 529-amino-acid chain; its full sequence is Arginine--tRNA ligase (529 aa).

Positions Ala-113 to His-123 match the 'HIGH' region motif.

The protein belongs to the class-I aminoacyl-tRNA synthetase family. As to quaternary structure, monomer.

The protein resides in the cytoplasm. It catalyses the reaction tRNA(Arg) + L-arginine + ATP = L-arginyl-tRNA(Arg) + AMP + diphosphate. This Campylobacter curvus (strain 525.92) protein is Arginine--tRNA ligase.